The sequence spans 473 residues: Ribulose bisphosphate carboxylase large chain (473 aa).

The propeptide occupies M1 to S2. P3 carries the post-translational modification N-acetylproline. N6,N6,N6-trimethyllysine is present on K14. Substrate is bound by residues N123 and T173. Residue K175 is the Proton acceptor of the active site. K177 contributes to the substrate binding site. Residues K201, D203, and E204 each contribute to the Mg(2+) site. An N6-carboxylysine modification is found at K201. Catalysis depends on H294, which acts as the Proton acceptor. Residues R295, H327, and S379 each contribute to the substrate site.

The protein belongs to the RuBisCO large chain family. Type I subfamily. As to quaternary structure, heterohexadecamer of 8 large chains and 8 small chains; disulfide-linked. The disulfide link is formed within the large subunit homodimers. Requires Mg(2+) as cofactor. The disulfide bond which can form in the large chain dimeric partners within the hexadecamer appears to be associated with oxidative stress and protein turnover.

The protein localises to the plastid. The protein resides in the chloroplast. The catalysed reaction is 2 (2R)-3-phosphoglycerate + 2 H(+) = D-ribulose 1,5-bisphosphate + CO2 + H2O. It catalyses the reaction D-ribulose 1,5-bisphosphate + O2 = 2-phosphoglycolate + (2R)-3-phosphoglycerate + 2 H(+). Its function is as follows. RuBisCO catalyzes two reactions: the carboxylation of D-ribulose 1,5-bisphosphate, the primary event in carbon dioxide fixation, as well as the oxidative fragmentation of the pentose substrate in the photorespiration process. Both reactions occur simultaneously and in competition at the same active site. The polypeptide is Ribulose bisphosphate carboxylase large chain (Monarda didyma (Scarlet bee-balm)).